We begin with the raw amino-acid sequence, 346 residues long: DNA polymerase IV 2 (346 aa).

In terms of domain architecture, UmuC spans 9–191 (ILHVDLDQFL…RTVEALWGVG (183 aa)). Mg(2+)-binding residues include Asp13 and Asp111. The active site involves Glu112.

Belongs to the DNA polymerase type-Y family. As to quaternary structure, monomer. Mg(2+) is required as a cofactor.

It localises to the cytoplasm. The enzyme catalyses DNA(n) + a 2'-deoxyribonucleoside 5'-triphosphate = DNA(n+1) + diphosphate. In terms of biological role, poorly processive, error-prone DNA polymerase involved in untargeted mutagenesis. Copies undamaged DNA at stalled replication forks, which arise in vivo from mismatched or misaligned primer ends. These misaligned primers can be extended by PolIV. Exhibits no 3'-5' exonuclease (proofreading) activity. May be involved in translesional synthesis, in conjunction with the beta clamp from PolIII. In Mycobacterium bovis (strain ATCC BAA-935 / AF2122/97), this protein is DNA polymerase IV 2 (dinB2).